Here is a 419-residue protein sequence, read N- to C-terminus: L-rhamnose isomerase (419 aa).

3 residues coordinate Mn(2+): His262, Asp294, and Asp296.

It belongs to the rhamnose isomerase family. In terms of assembly, homotetramer. It depends on Mn(2+) as a cofactor.

The protein localises to the cytoplasm. The catalysed reaction is L-rhamnopyranose = L-rhamnulose. Its pathway is carbohydrate degradation; L-rhamnose degradation; glycerone phosphate from L-rhamnose: step 1/3. In terms of biological role, catalyzes the interconversion of L-rhamnose and L-rhamnulose. In Shigella flexneri, this protein is L-rhamnose isomerase.